Here is a 198-residue protein sequence, read N- to C-terminus: Large ribosomal subunit protein uL23c (198 aa).

The N-terminal 76 residues, 1 to 76 (MATTAPNLHS…SFGRDLMVAQ (76 aa)), are a transit peptide targeting the chloroplast.

This sequence belongs to the universal ribosomal protein uL23 family. Component of the chloroplast large ribosomal subunit (LSU). Mature 70S chloroplast ribosomes of higher plants consist of a small (30S) and a large (50S) subunit. The 30S small subunit contains 1 molecule of ribosomal RNA (16S rRNA) and 24 different proteins. The 50S large subunit contains 3 rRNA molecules (23S, 5S and 4.5S rRNA) and 33 different proteins.

It localises to the plastid. The protein resides in the chloroplast. Its function is as follows. Component of the chloroplast ribosome (chloro-ribosome), a dedicated translation machinery responsible for the synthesis of chloroplast genome-encoded proteins, including proteins of the transcription and translation machinery and components of the photosynthetic apparatus. This is Large ribosomal subunit protein uL23c (RPL23) from Spinacia oleracea (Spinach).